Consider the following 477-residue polypeptide: MTPLPVVLAHALPELILAGGVLLLILIGAIRGKDSDGPMTELAVGLLGIAILTLVLGTKTQAVLFDGSFIDDAFGRFMKVLVLIGSLVSLIMGQTYLAREKIDKFEFPILILLSTLGMLMLISATGLIALYLGLELMSLALYVIAAFHRDDVKASEAGLKYFVLGALSSGMLLYGASLIYGFAGTVNFTGIATALHGETSLGVVFGLVFLTAGLAFKMSTVPFHMWTPDVYEGAPTPVTAFFASAPKLAAIAITMRIMITAFAGIKPQWQQIIVFISILSMALGSFAAIGQTNIKRLMAYSSIGHMGFALVGLAAGTETGIQGVLAYMAIYLVMTLGTFAAILSMRVNGVNVEQISDLAGLARTRGSMAFFLAIMMFSLAGIPPLAGFFAKWYVFNAAIQAHLYPLAVIGVLCSTVGAYYYLRIVKVMYFDDPAPAFDRPTPTLAAVLIVTGLAVLLLCVYPGSFVEATTVAARSLF.

13 helical membrane-spanning segments follow: residues 7 to 27 (VLAH…LILI), 37 to 57 (GPMT…LVLG), 77 to 97 (FMKV…QTYL), 109 to 129 (ILIL…GLIA), 162 to 182 (FVLG…IYGF), 201 to 221 (LGVV…MSTV), 233 to 253 (GAPT…AIAI), 272 to 292 (IIVF…IGQT), 297 to 317 (LMAY…AAGT), 323 to 343 (GVLA…AAIL), 369 to 389 (AFFL…AGFF), 402 to 424 (HLYP…YLRI), and 446 to 466 (AVLI…GSFV).

It belongs to the complex I subunit 2 family. NDH-1 is composed of 14 different subunits. Subunits NuoA, H, J, K, L, M, N constitute the membrane sector of the complex.

It is found in the cell inner membrane. It carries out the reaction a quinone + NADH + 5 H(+)(in) = a quinol + NAD(+) + 4 H(+)(out). In terms of biological role, NDH-1 shuttles electrons from NADH, via FMN and iron-sulfur (Fe-S) centers, to quinones in the respiratory chain. The immediate electron acceptor for the enzyme in this species is believed to be ubiquinone. Couples the redox reaction to proton translocation (for every two electrons transferred, four hydrogen ions are translocated across the cytoplasmic membrane), and thus conserves the redox energy in a proton gradient. The chain is NADH-quinone oxidoreductase subunit N from Beijerinckia indica subsp. indica (strain ATCC 9039 / DSM 1715 / NCIMB 8712).